Consider the following 200-residue polypeptide: Probable DNA-directed RNA polymerase subunit delta (200 aa).

Positions 19–88 (LSMIEVARAI…GDNKWGLRSW (70 aa)) constitute an HTH HARE-type domain. Composition is skewed to acidic residues over residues 125-143 (DSDA…DAYE) and 150-200 (YDDE…TSEE). The segment at 125 to 200 (DSDAIDYNAD…SDDDAETSEE (76 aa)) is disordered.

This sequence belongs to the RpoE family. As to quaternary structure, RNAP is composed of a core of 2 alpha, a beta and a beta' subunits. The core is associated with a delta subunit and one of several sigma factors.

Participates in both the initiation and recycling phases of transcription. In the presence of the delta subunit, RNAP displays an increased specificity of transcription, a decreased affinity for nucleic acids, and an increased efficiency of RNA synthesis because of enhanced recycling. In Streptococcus pneumoniae serotype 4 (strain ATCC BAA-334 / TIGR4), this protein is Probable DNA-directed RNA polymerase subunit delta.